A 707-amino-acid polypeptide reads, in one-letter code: Polyribonucleotide nucleotidyltransferase (707 aa).

Residues Asp487 and Asp493 each contribute to the Mg(2+) site. Residues 554 to 613 (PSMATIKIDPDKIRDVIGKGGATIRKICDDTGASIDLDDDGTVRIYAEDKTAAKAAIDTV) form the KH domain. The S1 motif domain maps to 623 to 691 (GKLYRGTVAR…NRNRVKLSIK (69 aa)).

The protein belongs to the polyribonucleotide nucleotidyltransferase family. In terms of assembly, component of the RNA degradosome, which is a multiprotein complex involved in RNA processing and mRNA degradation. The cofactor is Mg(2+).

It localises to the cytoplasm. The enzyme catalyses RNA(n+1) + phosphate = RNA(n) + a ribonucleoside 5'-diphosphate. Its function is as follows. Involved in mRNA degradation. Catalyzes the phosphorolysis of single-stranded polyribonucleotides processively in the 3'- to 5'-direction. The protein is Polyribonucleotide nucleotidyltransferase of Chromohalobacter salexigens (strain ATCC BAA-138 / DSM 3043 / CIP 106854 / NCIMB 13768 / 1H11).